The sequence spans 162 residues: Nucleotide-binding protein SGR_2909 (162 aa).

It belongs to the YajQ family.

Nucleotide-binding protein. The protein is Nucleotide-binding protein SGR_2909 of Streptomyces griseus subsp. griseus (strain JCM 4626 / CBS 651.72 / NBRC 13350 / KCC S-0626 / ISP 5235).